The primary structure comprises 217 residues: Cytidylate kinase (217 aa).

10–18 (GPAGAGKST) contributes to the ATP binding site.

Belongs to the cytidylate kinase family. Type 1 subfamily.

It is found in the cytoplasm. The enzyme catalyses CMP + ATP = CDP + ADP. The catalysed reaction is dCMP + ATP = dCDP + ADP. This is Cytidylate kinase from Clostridium botulinum (strain Loch Maree / Type A3).